An 82-amino-acid chain; its full sequence is uncharacterized protein (82 aa).

Its function is as follows. This protein may be involved in virus assembly. This is an uncharacterized protein from Sulfolobus spindle-shape virus 1 (SSV1).